The chain runs to 448 residues: Glutamyl-tRNA reductase (448 aa).

Substrate is bound by residues 49–52, Ser-109, 114–116, and Gln-120; these read TCNR and ETQ. The active-site Nucleophile is the Cys-50. Residue 189 to 194 coordinates NADP(+); it reads GAGEMS.

Belongs to the glutamyl-tRNA reductase family. As to quaternary structure, homodimer.

The enzyme catalyses (S)-4-amino-5-oxopentanoate + tRNA(Glu) + NADP(+) = L-glutamyl-tRNA(Glu) + NADPH + H(+). The protein operates within porphyrin-containing compound metabolism; protoporphyrin-IX biosynthesis; 5-aminolevulinate from L-glutamyl-tRNA(Glu): step 1/2. Its function is as follows. Catalyzes the NADPH-dependent reduction of glutamyl-tRNA(Glu) to glutamate 1-semialdehyde (GSA). This Staphylococcus haemolyticus (strain JCSC1435) protein is Glutamyl-tRNA reductase.